A 132-amino-acid chain; its full sequence is Protein NrdI (132 aa).

It belongs to the NrdI family.

In terms of biological role, probably involved in ribonucleotide reductase function. In Staphylococcus epidermidis (strain ATCC 35984 / DSM 28319 / BCRC 17069 / CCUG 31568 / BM 3577 / RP62A), this protein is Protein NrdI.